The sequence spans 101 residues: Urease subunit beta (101 aa).

The protein belongs to the urease beta subunit family. As to quaternary structure, heterotrimer of UreA (gamma), UreB (beta) and UreC (alpha) subunits. Three heterotrimers associate to form the active enzyme.

It localises to the cytoplasm. The catalysed reaction is urea + 2 H2O + H(+) = hydrogencarbonate + 2 NH4(+). It participates in nitrogen metabolism; urea degradation; CO(2) and NH(3) from urea (urease route): step 1/1. This chain is Urease subunit beta, found in Bradyrhizobium diazoefficiens (strain JCM 10833 / BCRC 13528 / IAM 13628 / NBRC 14792 / USDA 110).